A 70-amino-acid chain; its full sequence is MADQNDVDYEHLEYVDYKDTEFLEQFINNQGKILPRRVTGVPARVQRQITKAIKRARHLALMPYVSESVR.

It belongs to the bacterial ribosomal protein bS18 family. As to quaternary structure, part of the 30S ribosomal subunit. Forms a tight heterodimer with protein bS6.

Functionally, binds as a heterodimer with protein bS6 to the central domain of the 16S rRNA, where it helps stabilize the platform of the 30S subunit. This is Small ribosomal subunit protein bS18 from Salinibacter ruber (strain DSM 13855 / M31).